The sequence spans 346 residues: Putative [LysW]-L-2-aminoadipate/[LysW]-L-glutamate phosphate reductase (346 aa).

12–15 contacts NADP(+); the sequence is SGFT. The active site involves Cys-147. The disordered stretch occupies residues 178 to 198; it reads GSSEGGAGGGDASSHPERSGV. Asn-310 is an NADP(+) binding site.

Belongs to the NAGSA dehydrogenase family. Type 1 subfamily. LysY sub-subfamily.

Its subcellular location is the cytoplasm. The catalysed reaction is [amino-group carrier protein]-C-terminal-N-(1-carboxy-5-oxopentan-1-yl)-L-glutamine + phosphate + NADP(+) = [amino-group carrier protein]-C-terminal-N-(1-carboxy-5-phosphooxy-5-oxopentan-1-yl)-L-glutamine + NADPH + H(+). The enzyme catalyses [amino-group carrier protein]-C-terminal-gamma-(L-glutamyl-5-semialdehyde)-L-glutamate + phosphate + NADP(+) = [amino-group carrier protein]-C-terminal-gamma-(5-phospho-L-glutamyl)-L-glutamate + NADPH + H(+). The protein operates within amino-acid biosynthesis; L-lysine biosynthesis via AAA pathway; L-lysine from L-alpha-aminoadipate (Thermus route): step 3/5. It functions in the pathway amino-acid biosynthesis; L-arginine biosynthesis. Involved in both the arginine and lysine biosynthetic pathways. This chain is Putative [LysW]-L-2-aminoadipate/[LysW]-L-glutamate phosphate reductase, found in Haloquadratum walsbyi (strain DSM 16790 / HBSQ001).